Consider the following 490-residue polypeptide: GTPase Der (490 aa).

EngA-type G domains lie at 3–166 (PVIA…PKDE) and 196–369 (IKIA…KSAV). Residues 9–16 (GRPNVGKS), 56–60 (DTGGI), 118–121 (NKID), 202–209 (GRPNVGKS), 249–253 (DTAGV), and 314–317 (NKWD) contribute to the GTP site. In terms of domain architecture, KH-like spans 370-454 (TRWPTSRLTQ…PIRIEFKGGE (85 aa)). The disordered stretch occupies residues 452–490 (GGENPYEGNKNTLTDRQVNKKRRMMSHHKKADKKRRDKR). The span at 470–490 (NKKRRMMSHHKKADKKRRDKR) shows a compositional bias: basic residues.

The protein belongs to the TRAFAC class TrmE-Era-EngA-EngB-Septin-like GTPase superfamily. EngA (Der) GTPase family. As to quaternary structure, associates with the 50S ribosomal subunit.

GTPase that plays an essential role in the late steps of ribosome biogenesis. This chain is GTPase Der, found in Pseudomonas savastanoi pv. phaseolicola (strain 1448A / Race 6) (Pseudomonas syringae pv. phaseolicola (strain 1448A / Race 6)).